The chain runs to 602 residues: Elongation factor 4 (602 aa).

The tr-type G domain maps to 8–189; it reads KNIRNFSIIA…KIITTIPAPS (182 aa). GTP-binding positions include 20–25 and 136–139; these read DHGKST and NKID.

This sequence belongs to the TRAFAC class translation factor GTPase superfamily. Classic translation factor GTPase family. LepA subfamily.

Its subcellular location is the cell inner membrane. The enzyme catalyses GTP + H2O = GDP + phosphate + H(+). In terms of biological role, required for accurate and efficient protein synthesis under certain stress conditions. May act as a fidelity factor of the translation reaction, by catalyzing a one-codon backward translocation of tRNAs on improperly translocated ribosomes. Back-translocation proceeds from a post-translocation (POST) complex to a pre-translocation (PRE) complex, thus giving elongation factor G a second chance to translocate the tRNAs correctly. Binds to ribosomes in a GTP-dependent manner. In Helicobacter pylori (strain HPAG1), this protein is Elongation factor 4.